A 342-amino-acid polypeptide reads, in one-letter code: HPr kinase/phosphorylase (342 aa).

Catalysis depends on residues H153 and K174. 168-175 (GKSGLGKS) lines the ATP pocket. S175 lines the Mg(2+) pocket. D192 (proton acceptor; for phosphorylation activity. Proton donor; for dephosphorylation activity) is an active-site residue. The segment at 217–226 (MEIRGLGVVD) is important for the catalytic mechanism of both phosphorylation and dephosphorylation. E218 is a Mg(2+) binding site. R259 is an active-site residue. An important for the catalytic mechanism of dephosphorylation region spans residues 280–285 (PIFPGK).

This sequence belongs to the HPrK/P family. Homohexamer. Mg(2+) serves as cofactor.

The enzyme catalyses [HPr protein]-L-serine + ATP = [HPr protein]-O-phospho-L-serine + ADP + H(+). It catalyses the reaction [HPr protein]-O-phospho-L-serine + phosphate + H(+) = [HPr protein]-L-serine + diphosphate. Catalyzes the ATP- as well as the pyrophosphate-dependent phosphorylation of a specific serine residue in HPr, a phosphocarrier protein of the phosphoenolpyruvate-dependent sugar phosphotransferase system (PTS). HprK/P also catalyzes the pyrophosphate-producing, inorganic phosphate-dependent dephosphorylation (phosphorolysis) of seryl-phosphorylated HPr (P-Ser-HPr). The chain is HPr kinase/phosphorylase from Chlorobaculum tepidum (strain ATCC 49652 / DSM 12025 / NBRC 103806 / TLS) (Chlorobium tepidum).